Here is a 358-residue protein sequence, read N- to C-terminus: MENKLFSCIESRLRGKRNYYSRFYIGPFLKNQAFLYSNVLRRVLLSDSSNIVITAVNIVGAKHEYSLLPGVRESSLDLLLNLKELVFVKDIYTKFNKSYFAYLKSNGPKIIRCSDIILPNTIYAVDSTQYIATISNNKSLILKMKLTANLLNNFYSNLNYELNSLLSYYTNDILEKTNFSLIIDPNFSCVNKVNSSLISLDNLENYNDSISLEVWTNSSYSPRIIIQNSIKSMVNLFLSIYDTSFIDIKLENSDNFLENHLVSLSNRATFFKKSFFNICTEFNTVKYKTSFDKNLTLISIDELDLSIYSKFLLKRHNILTLYDLFKIDKRVLERFYNISYKTLQSIERKMVKYGTVNK.

The alpha N-terminal domain (alpha-NTD) stretch occupies residues 1-244 (MENKLFSCIE…NLFLSIYDTS (244 aa)). The tract at residues 287-358 (YKTSFDKNLT…KMVKYGTVNK (72 aa)) is alpha C-terminal domain (alpha-CTD).

The protein belongs to the RNA polymerase alpha chain family. Homodimer. The RNAP catalytic core consists of 2 alpha, 1 beta, 1 beta' and 1 omega subunit. When a sigma factor is associated with the core the holoenzyme is formed, which can initiate transcription.

The protein resides in the plastid. The protein localises to the chloroplast. The catalysed reaction is RNA(n) + a ribonucleoside 5'-triphosphate = RNA(n+1) + diphosphate. Functionally, DNA-dependent RNA polymerase catalyzes the transcription of DNA into RNA using the four ribonucleoside triphosphates as substrates. The sequence is that of DNA-directed RNA polymerase subunit alpha (rpoA) from Bigelowiella natans (Pedinomonas minutissima).